Here is a 604-residue protein sequence, read N- to C-terminus: Aspartate--tRNA(Asp/Asn) ligase (604 aa).

Residue Glu174 coordinates L-aspartate. An aspartate region spans residues 198 to 201 (QLYK). Arg220 contacts L-aspartate. Residues 220 to 222 (RDE) and Gln229 contribute to the ATP site. His460 serves as a coordination point for L-aspartate. An ATP-binding site is contributed by Glu494. An L-aspartate-binding site is contributed by Arg501. Residue 546–549 (GLDR) participates in ATP binding.

Belongs to the class-II aminoacyl-tRNA synthetase family. Type 1 subfamily. In terms of assembly, homodimer.

It is found in the cytoplasm. The enzyme catalyses tRNA(Asx) + L-aspartate + ATP = L-aspartyl-tRNA(Asx) + AMP + diphosphate. Functionally, aspartyl-tRNA synthetase with relaxed tRNA specificity since it is able to aspartylate not only its cognate tRNA(Asp) but also tRNA(Asn). Reaction proceeds in two steps: L-aspartate is first activated by ATP to form Asp-AMP and then transferred to the acceptor end of tRNA(Asp/Asn). The polypeptide is Aspartate--tRNA(Asp/Asn) ligase (Paracidovorax citrulli (strain AAC00-1) (Acidovorax citrulli)).